Consider the following 997-residue polypeptide: Protein translocase subunit SecA (997 aa).

Residues Gln102, Gly120–Thr124, and Asp521 each bind ATP. A disordered region spans residues Pro893–Ala997. Basic and acidic residues predominate over residues Ala938–His953. 4 residues coordinate Zn(2+): Cys981, Cys983, Cys992, and His993. Residues Lys987–Ala997 show a composition bias toward basic residues.

This sequence belongs to the SecA family. In terms of assembly, monomer and homodimer. Part of the essential Sec protein translocation apparatus which comprises SecA, SecYEG and auxiliary proteins SecDF. Other proteins may also be involved. Requires Zn(2+) as cofactor.

Its subcellular location is the cell inner membrane. The protein localises to the cytoplasm. The enzyme catalyses ATP + H2O + cellular proteinSide 1 = ADP + phosphate + cellular proteinSide 2.. Functionally, part of the Sec protein translocase complex. Interacts with the SecYEG preprotein conducting channel. Has a central role in coupling the hydrolysis of ATP to the transfer of proteins into and across the cell membrane, serving as an ATP-driven molecular motor driving the stepwise translocation of polypeptide chains across the membrane. This Acidobacterium capsulatum (strain ATCC 51196 / DSM 11244 / BCRC 80197 / JCM 7670 / NBRC 15755 / NCIMB 13165 / 161) protein is Protein translocase subunit SecA.